The following is a 135-amino-acid chain: Methylglyoxal synthase (135 aa).

An MGS-like domain is found at 1–135 (MQKTLALVAH…GLYERAVPEF (135 aa)). Residues His10, Lys14, 36–39 (TGTT), and 56–57 (SG) contribute to the substrate site. The active-site Proton donor/acceptor is Asp62. A substrate-binding site is contributed by His89.

The protein belongs to the methylglyoxal synthase family.

It catalyses the reaction dihydroxyacetone phosphate = methylglyoxal + phosphate. Its function is as follows. Catalyzes the formation of methylglyoxal from dihydroxyacetone phosphate. This is Methylglyoxal synthase from Pseudoalteromonas atlantica (strain T6c / ATCC BAA-1087).